The primary structure comprises 103 residues: Acylphosphatase-2 (103 aa).

The residue at position 2 (Ser-2) is an N-acetylserine. Residues 13–103 (SVDYEVFGRV…LDFSGFSTRY (91 aa)) enclose the Acylphosphatase-like domain. Catalysis depends on residues Arg-28 and Asn-46.

This sequence belongs to the acylphosphatase family.

The catalysed reaction is an acyl phosphate + H2O = a carboxylate + phosphate + H(+). Functionally, its physiological role is not yet clear. The chain is Acylphosphatase-2 (ACYP2) from Gallus gallus (Chicken).